Here is a 436-residue protein sequence, read N- to C-terminus: Magnesium transporter MRS2-4 (436 aa).

The interval 1-56 (MGKGPLSFRRLSSIRHRKKGSAVKDDSAQTSTPSSPPPPLPIHAGGSAVGATGKAK) is disordered. Over residues 12-21 (SSIRHRKKGS) the composition is skewed to basic residues. Positions 44–53 (AGGSAVGATG) are enriched in low complexity. A run of 2 helical transmembrane segments spans residues 372–392 (LTLTIASFAIAAETLLASLFG) and 405–425 (VFGYFVWSVTALCIVLFMVTL). A Required for magnesium transport activity motif is present at residues 392 to 394 (GMN).

The protein belongs to the CorA metal ion transporter (MIT) (TC 1.A.35.5) family. As to expression, expressed in the whole plant except roots.

It is found in the membrane. Its function is as follows. Magnesium transporter that may mediate the influx of magnesium. This is Magnesium transporter MRS2-4 (MRS2-4) from Arabidopsis thaliana (Mouse-ear cress).